The following is a 122-amino-acid chain: UPF0738 protein YjbL (122 aa).

Belongs to the UPF0738 family.

The polypeptide is UPF0738 protein YjbL (yjbL) (Bacillus subtilis (strain 168)).